Consider the following 451-residue polypeptide: tRNA-2-methylthio-N(6)-dimethylallyladenosine synthase (451 aa).

Residues 5-121 enclose the MTTase N-terminal domain; the sequence is RQYHITTFGC…LQDLLEQVEG (117 aa). Positions 14, 50, 84, 156, 160, and 163 each coordinate [4Fe-4S] cluster. One can recognise a Radical SAM core domain in the interval 142–379; the sequence is RDSTVTAWVN…NHLVAQKAAE (238 aa). The TRAM domain maps to 382 to 446; it reads QRYAGRIEEV…AFSLTGEAVE (65 aa).

This sequence belongs to the methylthiotransferase family. MiaB subfamily. In terms of assembly, monomer. [4Fe-4S] cluster serves as cofactor.

The protein resides in the cytoplasm. The catalysed reaction is N(6)-dimethylallyladenosine(37) in tRNA + (sulfur carrier)-SH + AH2 + 2 S-adenosyl-L-methionine = 2-methylsulfanyl-N(6)-dimethylallyladenosine(37) in tRNA + (sulfur carrier)-H + 5'-deoxyadenosine + L-methionine + A + S-adenosyl-L-homocysteine + 2 H(+). In terms of biological role, catalyzes the methylthiolation of N6-(dimethylallyl)adenosine (i(6)A), leading to the formation of 2-methylthio-N6-(dimethylallyl)adenosine (ms(2)i(6)A) at position 37 in tRNAs that read codons beginning with uridine. This Picosynechococcus sp. (strain ATCC 27264 / PCC 7002 / PR-6) (Agmenellum quadruplicatum) protein is tRNA-2-methylthio-N(6)-dimethylallyladenosine synthase.